Here is a 202-residue protein sequence, read N- to C-terminus: Imidazoleglycerol-phosphate dehydratase (202 aa).

The protein belongs to the imidazoleglycerol-phosphate dehydratase family.

It is found in the cytoplasm. The catalysed reaction is D-erythro-1-(imidazol-4-yl)glycerol 3-phosphate = 3-(imidazol-4-yl)-2-oxopropyl phosphate + H2O. The protein operates within amino-acid biosynthesis; L-histidine biosynthesis; L-histidine from 5-phospho-alpha-D-ribose 1-diphosphate: step 6/9. This Rhizobium johnstonii (strain DSM 114642 / LMG 32736 / 3841) (Rhizobium leguminosarum bv. viciae) protein is Imidazoleglycerol-phosphate dehydratase.